Reading from the N-terminus, the 427-residue chain is Septin-8-B (427 aa).

In terms of domain architecture, Septin-type G spans 39–305 (QGFCFNILCV…ELYRRCKLEE (267 aa)). The G1 motif stretch occupies residues 49 to 56 (GETGIGKS). GTP is bound by residues 49 to 56 (GETGIGKS), Gly-104, 185 to 193 (KADTISKSE), Gly-239, and Arg-254. The interval 101-104 (DTVG) is G3 motif. Residues 184–187 (AKAD) are G4 motif. Residues 320–407 (LQETYEAKRK…RRKVAMETLQ (88 aa)) adopt a coiled-coil conformation. A compositionally biased stretch (polar residues) spans 406 to 418 (LQSQSFQATSQQP). The tract at residues 406 to 427 (LQSQSFQATSQQPLKKDKDRKN) is disordered.

Belongs to the TRAFAC class TrmE-Era-EngA-EngB-Septin-like GTPase superfamily. Septin GTPase family.

The protein is Septin-8-B (sept8-b) of Xenopus laevis (African clawed frog).